A 37-amino-acid chain; its full sequence is Large ribosomal subunit protein bL36 (37 aa).

This sequence belongs to the bacterial ribosomal protein bL36 family.

This Cyanothece sp. (strain PCC 7425 / ATCC 29141) protein is Large ribosomal subunit protein bL36.